The primary structure comprises 267 residues: PF03932 family protein CutC (267 aa).

This sequence belongs to the CutC family.

It is found in the cytoplasm. In Xylella fastidiosa (strain Temecula1 / ATCC 700964), this protein is PF03932 family protein CutC.